A 436-amino-acid polypeptide reads, in one-letter code: NADH-quinone oxidoreductase subunit D 1 (436 aa).

The protein belongs to the complex I 49 kDa subunit family. In terms of assembly, NDH-1 is composed of 14 different subunits. Subunits NuoB, C, D, E, F, and G constitute the peripheral sector of the complex.

It is found in the cell inner membrane. It carries out the reaction a quinone + NADH + 5 H(+)(in) = a quinol + NAD(+) + 4 H(+)(out). Its function is as follows. NDH-1 shuttles electrons from NADH, via FMN and iron-sulfur (Fe-S) centers, to quinones in the respiratory chain. The immediate electron acceptor for the enzyme in this species is believed to be ubiquinone. Couples the redox reaction to proton translocation (for every two electrons transferred, four hydrogen ions are translocated across the cytoplasmic membrane), and thus conserves the redox energy in a proton gradient. The chain is NADH-quinone oxidoreductase subunit D 1 from Stenotrophomonas maltophilia (strain R551-3).